The following is a 307-amino-acid chain: Myeloid-associated differentiation marker-like protein 2 (307 aa).

MARVEL domains lie at 17-154 (AVTS…ARPG) and 159-303 (YMAT…RIRF). 7 helical membrane passes run 53–73 (FCMA…ACEF), 90–110 (AFAM…PLYF), 129–149 (LAAS…VALT), 163–183 (VSGL…GALV), 198–218 (VAVY…SVMG), 229–249 (RLVV…AVIW), and 278–298 (LVVA…LAYS).

Belongs to the MAL family.

Its subcellular location is the membrane. The polypeptide is Myeloid-associated differentiation marker-like protein 2 (MYADML2) (Homo sapiens (Human)).